The chain runs to 426 residues: MQISCLPISIPSITPRTSIPLLPSLSSNPRRIFNLTSLQSPNHCFFKRLHKSQTGFSNPVLAAMRREEDVEVDDSFYMRKCVELAKRAIGCTSPNPMVGCVIVKDGDIVGQGFHPKAGQPHAEVFALRDAGELAENATAYVSLEPCNHYGRTPPCTEALIKAKVRRVVIGMVDPNPIVFSSGISRLKDAGIDVTVSVEEELCKKMNEGFIHRMLTGKPFLALRYSMSVNGCLLDKIGQGASDSGGYYSKLLQEYDAIILSSSLSDELSSISSQEAINVSIQPIQIIVASNAQQSHILASSHTVEESGPKVVVFTAKESVAESGISSSGVETVVLEKINLDSILDYCYNRGLCSVLLDLRGNVKDLEVLLRDGFEQKLLQKVIIEVLPEWSTKDERQIASMKWLESKHVKDLQSKQLGGSVLLEGYF.

The transit peptide at 1–61 directs the protein to the chloroplast; that stretch reads MQISCLPISI…SQTGFSNPVL (61 aa). The region spanning 72–194 is the CMP/dCMP-type deaminase domain; that stretch reads VDDSFYMRKC…RLKDAGIDVT (123 aa). Position 121 (H121) interacts with Zn(2+). E123 functions as the Proton donor in the catalytic mechanism. C146 and C155 together coordinate Zn(2+).

Zn(2+) serves as cofactor.

It is found in the plastid. The protein resides in the chloroplast. It catalyses the reaction 2,5-diamino-6-hydroxy-4-(5-phosphoribosylamino)-pyrimidine + H2O + H(+) = 5-amino-6-(5-phospho-D-ribosylamino)uracil + NH4(+). The protein operates within cofactor biosynthesis; riboflavin biosynthesis; 5-amino-6-(D-ribitylamino)uracil from GTP: step 2/4. Functionally, monofunctional pyrimidine deaminase involved in the riboflavin biosynthesis pathway. Also has a reductase domain that lacks catalytically essential substrate-binding residues. The sequence is that of Riboflavin biosynthesis protein PYRD, chloroplastic (PYRD) from Arabidopsis thaliana (Mouse-ear cress).